The following is a 157-amino-acid chain: Ribosome-binding factor A (157 aa).

Residues 126–157 are disordered; that stretch reads RARATAQYAGDADPYKHDDEPSDDFEDDSDEE. Residues 145–157 are compositionally biased toward acidic residues; the sequence is EPSDDFEDDSDEE.

The protein belongs to the RbfA family. As to quaternary structure, monomer. Binds 30S ribosomal subunits, but not 50S ribosomal subunits or 70S ribosomes.

It is found in the cytoplasm. In terms of biological role, one of several proteins that assist in the late maturation steps of the functional core of the 30S ribosomal subunit. Associates with free 30S ribosomal subunits (but not with 30S subunits that are part of 70S ribosomes or polysomes). Required for efficient processing of 16S rRNA. May interact with the 5'-terminal helix region of 16S rRNA. This Bifidobacterium longum (strain DJO10A) protein is Ribosome-binding factor A.